The following is a 283-amino-acid chain: Lectin subunit alpha (283 aa).

An N-terminal signal peptide occupies residues 1-23 (MSLTMKNVEGFVIFLVIFTSTAA). The 109-residue stretch at 51 to 159 (HECARHDQQL…NVKMGYICEP (109 aa)) folds into the C-type lectin domain. 2 cysteine pairs are disulfide-bonded: C53–C157 and C132–C149.

Functionally, role in the defense system of the organism against microorganisms. This lectin binds galactose. The polypeptide is Lectin subunit alpha (Sarcophaga peregrina (Flesh fly)).